The chain runs to 108 residues: MSHGPNLTTFDEGRLMQVLVAPIVSEKATMIAEKSNAVTFKVLQDATKYEIKAAVQLMFKVEVKGVSVVNTKGKTKRFGKSVGRRDNIRKAYVTLKPGQELNLGGEAA.

The protein belongs to the universal ribosomal protein uL23 family. As to quaternary structure, part of the 50S ribosomal subunit. Contacts protein L29, and trigger factor when it is bound to the ribosome.

Functionally, one of the early assembly proteins it binds 23S rRNA. One of the proteins that surrounds the polypeptide exit tunnel on the outside of the ribosome. Forms the main docking site for trigger factor binding to the ribosome. This Albidiferax ferrireducens (strain ATCC BAA-621 / DSM 15236 / T118) (Rhodoferax ferrireducens) protein is Large ribosomal subunit protein uL23.